Reading from the N-terminus, the 1319-residue chain is Son of sevenless homolog 1 (1319 aa).

Residues 200–390 (TYYDLVKAFM…LNVQSGMEKI (191 aa)) enclose the DH domain. The PH domain occupies 444-548 (FIMEGTLTRV…AALISLQYRS (105 aa)). The N-terminal Ras-GEF domain maps to 597–741 (GIPIIKAGTV…SITKIIQRKK (145 aa)). The region spanning 780-1019 (HPIEIARQLT…FNKSLEIEPR (240 aa)) is the Ras-GEF domain. Residues 1019–1101 (RHPKPLPRFP…ASGTSSNTDV (83 aa)) form a disordered region. Serine 1078 and serine 1082 each carry phosphoserine. 2 positions are modified to phosphoserine; by RPS6KA3: serine 1120 and serine 1147. The interval 1121 to 1319 (VSSISLSKGT…PPLLENAHSS (199 aa)) is disordered. Serine 1164, serine 1196, and serine 1215 each carry phosphoserine. The segment covering 1194-1203 (PESPPLLPPR) has biased composition (pro residues). Over residues 1238–1250 (SPSPFTPPPPQTP) the composition is skewed to pro residues. Serine 1261 bears the Phosphoserine mark. Residues 1296–1309 (YKREHTHPSMHRDG) show a composition bias toward basic and acidic residues.

In terms of assembly, interacts (via C-terminus) with GRB2 (via SH3 domain). Forms a complex with phosphorylated MUC1 and GRB2 (via its SH3 domains). Interacts with phosphorylated LAT2. Interacts with NCK1 and NCK2. Part of a complex consisting of ABI1, EPS8 and SOS1. Interacts (Ser-1120 and Ser-1147 phosphorylated form) with YWHAB and YWHAE. Phosphorylation at Ser-1120 and Ser-1147 by RPS6KA3 create YWHAB and YWHAE binding sites and which contribute to the negative regulation of EGF-induced MAPK1/3 phosphorylation. As to expression, expressed in most embryonic and adult tissues.

In terms of biological role, promotes the exchange of Ras-bound GDP by GTP. Probably by promoting Ras activation, regulates phosphorylation of MAP kinase MAPK3 in response to EGF. Catalytic component of a trimeric complex that participates in transduction of signals from Ras to Rac by promoting the Rac-specific guanine nucleotide exchange factor (GEF) activity. The polypeptide is Son of sevenless homolog 1 (Sos1) (Mus musculus (Mouse)).